A 238-amino-acid chain; its full sequence is MALETLTSPRLSSPMPTLFQDSALGFHGSKGKRSKRSRSEFDRQSLTEDEYIALCLMLLARDGDRNRDLDLPSSSSSPPLLPPLPTPIYKCSVCDKAFSSYQALGGHKASHRKSFSLTQSAGGDELSTSSAITTSGISGGGGGSVKSHVCSICHKSFATGQALGGHKRCHYEGKNGGGVSSSVSNSEDVGSTSHVSSGHRGFDLNIPPIPEFSMVNGDEEVMSPMPAKKLRFDFPEKP.

The span at 1-15 (MALETLTSPRLSSPM) shows a compositional bias: polar residues. Residues 1–42 (MALETLTSPRLSSPMPTLFQDSALGFHGSKGKRSKRSRSEFD) are disordered. The Nuclear localization signal motif lies at 30–38 (KGKRSKRSR). C2H2-type zinc fingers lie at residues 89–111 (YKCS…KASH) and 148–170 (HVCS…KRCH). The disordered stretch occupies residues 175–202 (NGGGVSSSVSNSEDVGSTSHVSSGHRGF). Over residues 180–193 (SSSVSNSEDVGSTS) the composition is skewed to low complexity.

It localises to the nucleus. Its function is as follows. Probable transcription factor that regulates root development and phosphate (Pi) acquisition and homeostasis. Probably acts as a repressor of primary root growth and regulates Pi homeostasis through the control of root architecture. The polypeptide is Zinc finger protein ZAT6 (ZAT6) (Arabidopsis thaliana (Mouse-ear cress)).